Here is a 303-residue protein sequence, read N- to C-terminus: MSEPQPDLEPPQHGLYMLFLLVLVFFLMGLVGFMICHVLKKKGYRCRTSRGSEPDDAQLQPPEDDDMNEDTVERIVRCIIQNEANAEALKEMLGDSEGEGTVQLSSVDATSSLQDGAPSHHHTVHLGSAAPCLHCSRSKRPPLVRQGRSKEGKSRPRTGETTVFSVGRFRVTHIEKRYGLHEHRDGSPTDRSWGSGGGQDPGGGQGSGGGQPKAGMPAMERLPPERPQPQVLASPPVQNGGLRDSSLTPRALEGNPRASAEPTLRAGGRGPSPGLPTQEANGQPSKPDTSDHQVSLPQGAGSM.

The helical transmembrane segment at L15–I35 threads the bilayer. Disordered regions lie at residues C46–M67 and C132–M303. The residue at position 52 (S52) is a Phosphoserine. Basic and acidic residues-rich tracts occupy residues R148–T158 and T172–P188. Gly residues predominate over residues G194–P212. Residues Q278–L296 show a composition bias toward polar residues.

Belongs to the RELT family. As to quaternary structure, interacts with RELT, RELL1 and OXSR1. Interacts with PLSCR1. Interacts with TRAF2. In terms of processing, phosphorylated in vitro by OXSR1. Primarily expressed in spleen, thymus, testis, peripheral blood leukocytes, brain and placenta. Not detected in prostate, ovary, small intestine, colon, heart, lung, liver, skeletal muscle, kidney and pancreas.

It localises to the cell membrane. In terms of biological role, induces activation of MAPK14/p38 cascade, when overexpressed. Induces apoptosis, when overexpressed. The chain is RELT-like protein 2 (RELL2) from Homo sapiens (Human).